A 271-amino-acid chain; its full sequence is ATP synthase subunit a (271 aa).

The next 5 helical transmembrane spans lie at 31-51 (WDTILTSVIAGVIVVGLGLYM), 89-109 (FVAPMAVTLFVYILLCNWIGV), 124-144 (DINLTLTLALVVIVPMHIVSL), 186-206 (IFSGAIMVSLLALMPPYVLWL), and 216-236 (LGVGVIQAFIFALLTILYYAF). Positions 247 to 271 (DEHADGGDSSSRQASPTPLPAGQVR) are disordered.

The protein belongs to the ATPase A chain family. As to quaternary structure, F-type ATPases have 2 components, CF(1) - the catalytic core - and CF(0) - the membrane proton channel. CF(1) has five subunits: alpha(3), beta(3), gamma(1), delta(1), epsilon(1). CF(0) has three main subunits: a(1), b(2) and c(9-12). The alpha and beta chains form an alternating ring which encloses part of the gamma chain. CF(1) is attached to CF(0) by a central stalk formed by the gamma and epsilon chains, while a peripheral stalk is formed by the delta and b chains.

It localises to the cell membrane. Key component of the proton channel; it plays a direct role in the translocation of protons across the membrane. This Acidothermus cellulolyticus (strain ATCC 43068 / DSM 8971 / 11B) protein is ATP synthase subunit a.